Here is a 183-residue protein sequence, read N- to C-terminus: Caspase recruitment domain-containing protein 19 (183 aa).

A disulfide bond links Cys7 and Cys77. Residues 8–99 (DRLVQDTPFL…PLHSHLPSRY (92 aa)) form the CARD domain. The chain crosses the membrane as a helical span at residues 122–142 (GPMSFLAGLGLAAGLALLLYC).

As to quaternary structure, associates with BCL10 by CARD-CARD interaction.

It is found in the endoplasmic reticulum membrane. The protein localises to the mitochondrion membrane. Plays a role in inhibiting the effects of BCL10-induced activation of NF-kappa-B. The chain is Caspase recruitment domain-containing protein 19 from Mus musculus (Mouse).